Here is a 563-residue protein sequence, read N- to C-terminus: L-lactate permease (563 aa).

Helical transmembrane passes span 14–34, 37–57, 73–93, 131–151, 157–177, 194–214, 220–240, 249–269, 304–324, 381–401, 419–439, 448–468, 506–526, and 542–562; these read LLLSALAALVPIIFFFWALAI, MKGYTAGLATLGIALIIAVLV, AVYGLLPIGWIIVTSVFLYKI, GAAGFGAPVAISAALLVGLGF, AGICLIANTAPVAFGAIGIPI, MVGRQLPFLSVFIPLYLIIIM, ALEIWPAILVSGVSFAVVQYL, LPDVLSALVSMAALAVFLKWW, IFKAWSPFLLLTAMISVWGIP, LGSAGTAILIAAVLSKFITAI, LPILTIASVVGFAYVTNSSGM, ALTGSMFTFFSPVLGWLGVFI, VTGKMISPQSIAVACAAVGLA, and FLLLLVCIITFLQHHVFSWMI.

It belongs to the lactate permease family.

It localises to the cell membrane. Its function is as follows. Is the principal permease for the uptake of L-lactate in B.subtilis. This chain is L-lactate permease (lutP), found in Bacillus subtilis (strain 168).